We begin with the raw amino-acid sequence, 1057 residues long: Diacylglycerol kinase iota (1057 aa).

Residues alanine 15–alanine 59 show a composition bias toward low complexity. Disordered regions lie at residues alanine 15 to serine 74 and leucine 334 to glutamate 358. A compositionally biased stretch (basic residues) spans serine 337–lysine 352. Residues proline 372–asparagine 507 enclose the DAGKc domain. ANK repeat units follow at residues aspartate 950 to leucine 979 and threonine 986 to lysine 1015. Residues arginine 1014 to glutamine 1024 show a composition bias toward basic and acidic residues. The disordered stretch occupies residues arginine 1014 to proline 1033. The PDZ-binding motif lies at threonine 1055 to valine 1057.

This sequence belongs to the eukaryotic diacylglycerol kinase family. Interacts (via PDZ-binding motif) with DLG4; controls the localization of DGKI to the synapse. Interacts (via PDZ-binding motif) with DLG1. Interacts (via PDZ-binding motif) with DLG2. Interacts (via PDZ-binding motif) with DLG3. May interact with RASGRP3; involved in the regulation of RASGRP3 activity. In terms of tissue distribution, specifically expressed in brain and retina. In brain, highly expressed in hippocampus, caudate nucleus, occipital pole, cerebral cortex, and cerebellum. Also detected in kidney.

Its subcellular location is the cell projection. It is found in the axon. It localises to the dendrite. The protein localises to the presynapse. The protein resides in the postsynapse. Its subcellular location is the postsynaptic density. It is found in the synaptic cell membrane. It localises to the cytoplasmic vesicle. The protein localises to the secretory vesicle. The protein resides in the synaptic vesicle membrane. Its subcellular location is the cytoplasm. It is found in the cytosol. It localises to the nucleus. The enzyme catalyses a 1,2-diacyl-sn-glycerol + ATP = a 1,2-diacyl-sn-glycero-3-phosphate + ADP + H(+). The catalysed reaction is 1,2-di-(9Z-octadecenoyl)-sn-glycerol + ATP = 1,2-di-(9Z-octadecenoyl)-sn-glycero-3-phosphate + ADP + H(+). It carries out the reaction 1-octadecanoyl-2-(5Z,8Z,11Z,14Z-eicosatetraenoyl)-sn-glycerol + ATP = 1-octadecanoyl-2-(5Z,8Z,11Z,14Z-eicosatetraenoyl)-sn-glycero-3-phosphate + ADP + H(+). It catalyses the reaction 1-octadecanoyl-2-(9Z,12Z)-octadecadienoyl-sn-glycerol + ATP = 1-octadecanoyl-2-(9Z,12Z-octadecadienoyl)-sn-glycero-3-phosphate + ADP + H(+). It functions in the pathway lipid metabolism; glycerolipid metabolism. In terms of biological role, diacylglycerol kinase that converts diacylglycerol/DAG into phosphatidic acid/phosphatidate/PA and regulates the respective levels of these two bioactive lipids. Thereby, acts as a central switch between the signaling pathways activated by these second messengers with different cellular targets and opposite effects in numerous biological processes. Has probably no preference for any of the diacylglycerols in terms of the acyl chain composition, especially for the acyl chain at the sn-2 position. By controlling the diacylglycerol/DAG-mediated activation of RASGRP3, negatively regulates the Rap1 signaling pathway. May play a role in presynaptic diacylglycerol/DAG signaling and control neurotransmitter release during metabotropic glutamate receptor-dependent long-term depression. The sequence is that of Diacylglycerol kinase iota from Homo sapiens (Human).